The chain runs to 180 residues: Adenine phosphoribosyltransferase (180 aa).

N-acetylalanine is present on Ala-2. Phosphoserine is present on residues Ser-15 and Ser-30. Tyr-60 is subject to Phosphotyrosine. A Phosphoserine modification is found at Ser-66. The residue at position 114 (Lys-114) is an N6-acetyllysine. Phosphothreonine is present on Thr-135.

It belongs to the purine/pyrimidine phosphoribosyltransferase family. Homodimer.

It is found in the cytoplasm. It catalyses the reaction AMP + diphosphate = 5-phospho-alpha-D-ribose 1-diphosphate + adenine. The protein operates within purine metabolism; AMP biosynthesis via salvage pathway; AMP from adenine: step 1/1. In terms of biological role, catalyzes a salvage reaction resulting in the formation of AMP, that is energically less costly than de novo synthesis. The chain is Adenine phosphoribosyltransferase from Dipodillus campestris (North African gerbil).